Here is a 659-residue protein sequence, read N- to C-terminus: Threonine--tRNA ligase (659 aa).

Positions 1-61 (MSAVPELRIT…ADGDVVEEIR (61 aa)) constitute a TGS domain. Positions 260–555 (DHRKLGVELD…LLEHYAGAFP (296 aa)) are catalytic. Residues cysteine 353, histidine 404, and histidine 532 each coordinate Zn(2+).

Belongs to the class-II aminoacyl-tRNA synthetase family. Homodimer. The cofactor is Zn(2+).

The protein localises to the cytoplasm. It catalyses the reaction tRNA(Thr) + L-threonine + ATP = L-threonyl-tRNA(Thr) + AMP + diphosphate + H(+). Functionally, catalyzes the attachment of threonine to tRNA(Thr) in a two-step reaction: L-threonine is first activated by ATP to form Thr-AMP and then transferred to the acceptor end of tRNA(Thr). Also edits incorrectly charged L-seryl-tRNA(Thr). In Thermobifida fusca (strain YX), this protein is Threonine--tRNA ligase.